Consider the following 128-residue polypeptide: MFS18 protein (128 aa).

Residues 1–25 form the signal peptide; that stretch reads MARSSKMMVAARLLALALAVSTAEA. Residues 26–79 are disordered; it reads RNIKTTTTEKKDDAVVQPQTFPPFDRLGGGASPAFGGLPGGSIPGSSIPGFSMP. The span at 52–68 shows a compositional bias: gly residues; it reads LGGGASPAFGGLPGGSI. 11 repeat units span residues 64-67, 64-75, 69-72, 69-80, 74-77, 79-82, 81-92, 86-89, 91-94, 104-107, and 113-116. The 3 X approximate tandem repeats stretch occupies residues 64 to 92; that stretch reads PGGSIPGSSIPGFSMPGSGSSLPGFSLPG. Positions 64–116 are 8 X 4 AA approximate repeats; sequence PGGSIPGSSIPGFSMPGSGSSLPGFSLPGSGTMPLFGGGSPGFSGFGGMPGSP. Residues 69-79 are compositionally biased toward low complexity; the sequence is PGSSIPGFSMP. The segment covering 99–113 has biased composition (gly residues); sequence FGGGSPGFSGFGGMP. The disordered stretch occupies residues 99-128; that stretch reads FGGGSPGFSGFGGMPGSPTAGSVPEHANKP.

Enhanced expression in male flowers. Accumulates in the glumes and in anther walls, paleas and lemmas of mature florets.

The sequence is that of MFS18 protein (MFS18) from Zea mays (Maize).